A 141-amino-acid polypeptide reads, in one-letter code: Large ribosomal subunit protein uL11 (141 aa).

It belongs to the universal ribosomal protein uL11 family. Part of the ribosomal stalk of the 50S ribosomal subunit. Interacts with L10 and the large rRNA to form the base of the stalk. L10 forms an elongated spine to which L12 dimers bind in a sequential fashion forming a multimeric L10(L12)X complex. Post-translationally, one or more lysine residues are methylated.

In terms of biological role, forms part of the ribosomal stalk which helps the ribosome interact with GTP-bound translation factors. The polypeptide is Large ribosomal subunit protein uL11 (Chlamydia caviae (strain ATCC VR-813 / DSM 19441 / 03DC25 / GPIC) (Chlamydophila caviae)).